A 171-amino-acid chain; its full sequence is 3-hydroxydecanoyl-[acyl-carrier-protein] dehydratase (171 aa).

His-70 is an active-site residue.

This sequence belongs to the thioester dehydratase family. FabA subfamily. In terms of assembly, homodimer.

The protein resides in the cytoplasm. The catalysed reaction is a (3R)-hydroxyacyl-[ACP] = a (2E)-enoyl-[ACP] + H2O. It catalyses the reaction (3R)-hydroxydecanoyl-[ACP] = (2E)-decenoyl-[ACP] + H2O. It carries out the reaction (2E)-decenoyl-[ACP] = (3Z)-decenoyl-[ACP]. The protein operates within lipid metabolism; fatty acid biosynthesis. Necessary for the introduction of cis unsaturation into fatty acids. Catalyzes the dehydration of (3R)-3-hydroxydecanoyl-ACP to E-(2)-decenoyl-ACP and then its isomerization to Z-(3)-decenoyl-ACP. Can catalyze the dehydratase reaction for beta-hydroxyacyl-ACPs with saturated chain lengths up to 16:0, being most active on intermediate chain length. This Nitrosococcus oceani (strain ATCC 19707 / BCRC 17464 / JCM 30415 / NCIMB 11848 / C-107) protein is 3-hydroxydecanoyl-[acyl-carrier-protein] dehydratase.